We begin with the raw amino-acid sequence, 298 residues long: Acetylglutamate kinase (298 aa).

Substrate-binding positions include 61–62, R83, and N188; that span reads GG.

Belongs to the acetylglutamate kinase family. ArgB subfamily.

Its subcellular location is the cytoplasm. The enzyme catalyses N-acetyl-L-glutamate + ATP = N-acetyl-L-glutamyl 5-phosphate + ADP. It participates in amino-acid biosynthesis; L-arginine biosynthesis; N(2)-acetyl-L-ornithine from L-glutamate: step 2/4. Functionally, catalyzes the ATP-dependent phosphorylation of N-acetyl-L-glutamate. The protein is Acetylglutamate kinase of Syntrophobacter fumaroxidans (strain DSM 10017 / MPOB).